Here is a 77-residue protein sequence, read N- to C-terminus: Large ribosomal subunit protein uL24 (77 aa).

Belongs to the universal ribosomal protein uL24 family. As to quaternary structure, part of the 50S ribosomal subunit.

In terms of biological role, one of two assembly initiator proteins, it binds directly to the 5'-end of the 23S rRNA, where it nucleates assembly of the 50S subunit. Functionally, one of the proteins that surrounds the polypeptide exit tunnel on the outside of the subunit. The sequence is that of Large ribosomal subunit protein uL24 from Campylobacter jejuni subsp. doylei (strain ATCC BAA-1458 / RM4099 / 269.97).